A 918-amino-acid polypeptide reads, in one-letter code: Protein translocase subunit SecA (918 aa).

ATP is bound by residues Gln87, 105–109 (GEGKT), and Asp494. The segment covering 863–883 (KQDDTSPKEYKKIGQEQRAEV) has biased composition (basic and acidic residues). The tract at residues 863–918 (KQDDTSPKEYKKIGQEQRAEVDMFGNELKSNKTKPQVSSTTSSGGGSERRSSRRKK) is disordered.

This sequence belongs to the SecA family. As to quaternary structure, monomer and homodimer. Part of the essential Sec protein translocation apparatus which comprises SecA, SecYEG and auxiliary proteins SecDF. Other proteins may also be involved.

It is found in the cell inner membrane. Its subcellular location is the cytoplasm. It catalyses the reaction ATP + H2O + cellular proteinSide 1 = ADP + phosphate + cellular proteinSide 2.. In terms of biological role, part of the Sec protein translocase complex. Interacts with the SecYEG preprotein conducting channel. Has a central role in coupling the hydrolysis of ATP to the transfer of proteins into and across the cell membrane, serving as an ATP-driven molecular motor driving the stepwise translocation of polypeptide chains across the membrane. The protein is Protein translocase subunit SecA of Leptospira biflexa serovar Patoc (strain Patoc 1 / Ames).